Consider the following 444-residue polypeptide: L-ornithine N(5)-monooxygenase (444 aa).

Residues 40 to 48 (ERQPAFGWH) and Gln59 each bind FAD. Residue Lys64 participates in substrate binding. Val125 is an FAD binding site. NADP(+) contacts are provided by residues 211–214 (AGQS) and Arg236. Residues 250–253 (NEIF) and Asn280 contribute to the substrate site. 280–282 (NYA) serves as a coordination point for NADP(+). 408 to 410 (RCC) is a binding site for FAD. Residues 420-432 (SARRSKTGSRPRT) are compositionally biased toward basic residues. A disordered region spans residues 420 to 444 (SARRSKTGSRPRTMKAWPGPRTKND).

This sequence belongs to the lysine N(6)-hydroxylase/L-ornithine N(5)-oxygenase family. FAD is required as a cofactor.

The catalysed reaction is L-ornithine + NADPH + O2 = N(5)-hydroxy-L-ornithine + NADP(+) + H2O. It functions in the pathway siderophore biosynthesis; ornibactin biosynthesis. Its function is as follows. Catalyzes the conversion of L-ornithine to N(5)-hydroxyornithine, the first step in the biosynthesis of all hydroxamate-containing siderophores, such as ornibactin. This is L-ornithine N(5)-monooxygenase from Burkholderia cepacia (Pseudomonas cepacia).